Here is a 213-residue protein sequence, read N- to C-terminus: Orotate phosphoribosyltransferase (213 aa).

Lysine 26 serves as a coordination point for 5-phospho-alpha-D-ribose 1-diphosphate. Orotate is bound at residue 34–35 (FF). 5-phospho-alpha-D-ribose 1-diphosphate contacts are provided by residues 72–73 (YK), arginine 99, lysine 100, lysine 103, histidine 105, and 124–132 (DDVITAGTA). The orotate site is built by threonine 128 and arginine 156.

The protein belongs to the purine/pyrimidine phosphoribosyltransferase family. PyrE subfamily. As to quaternary structure, homodimer. It depends on Mg(2+) as a cofactor.

The enzyme catalyses orotidine 5'-phosphate + diphosphate = orotate + 5-phospho-alpha-D-ribose 1-diphosphate. It participates in pyrimidine metabolism; UMP biosynthesis via de novo pathway; UMP from orotate: step 1/2. In terms of biological role, catalyzes the transfer of a ribosyl phosphate group from 5-phosphoribose 1-diphosphate to orotate, leading to the formation of orotidine monophosphate (OMP). The protein is Orotate phosphoribosyltransferase of Actinobacillus pleuropneumoniae serotype 5b (strain L20).